The sequence spans 678 residues: ATP-dependent RNA helicase DHX58 (678 aa).

The 178-residue stretch at 11 to 188 (ILPALEGKNI…QGAIDHILQL (178 aa)) folds into the Helicase ATP-binding domain. 24–31 (LPTGAGKT) serves as a coordination point for ATP. Positions 131 to 134 (DECH) match the DECH box motif. In terms of domain architecture, Helicase C-terminal spans 353 to 514 (MLERILLKQF…KAVAAVQKMD (162 aa)). Positions 489-546 (EMKRELTNEALEVLMEKAVAAVQKMDPDEFKAKIRDLQQASLVKRAARAAHREIQQGQ) form a coiled coil. Residues 542–669 (IQQGQFLPEH…PVFDILQDCT (128 aa)) form the RLR CTR domain. 4 residues coordinate Zn(2+): Cys556, Cys559, Cys612, and Cys615. Residues 572 to 655 (VEGTHHVNVN…KIQAKKWSRV (84 aa)) are RNA-binding.

The protein belongs to the helicase family. RLR subfamily. In terms of assembly, monomer in the absence of dsRNA. Homodimer in the presence of dsRNA. Interacts with RIGI (via CARD domain), MAVS/IPS1 and DDX60. Found in a complex with RIGI and IFIH1/MDA5. Interacts with ANKRD17. Directly interacts with ATG5 and ATG12, either as ATG5 and ATG12 monomers or as ATG12-ATG5 conjugates. As to expression, highly expressed in mammary tissues. Expressed in liver and testis. Expressed at lower level in spleen, embryo, mammary gland and breast tumors.

It is found in the cytoplasm. It catalyses the reaction ATP + H2O = ADP + phosphate + H(+). Its function is as follows. Acts as a regulator of RIGI and IFIH1/MDA5 mediated antiviral signaling. Cannot initiate antiviral signaling as it lacks the CARD domain required for activating MAVS/IPS1-dependent signaling events. Can have both negative and positive regulatory functions related to RIGI and IFIH1/MDA5 signaling and this role in regulating signaling may be complex and could probably depend on characteristics of the infecting virus or target cells, or both. Its inhibitory action on RIG-I signaling may involve the following mechanisms: competition with RIGI for binding to the viral RNA, binding to RIGI and inhibiting its dimerization and interaction with MAVS/IPS1, competing with IKBKE in its binding to MAVS/IPS1 thereby inhibiting activation of interferon regulatory factor 3 (IRF3). Its positive regulatory role may involve unwinding or stripping nucleoproteins of viral RNA thereby facilitating their recognition by RIGI and IFIH1/MDA5. Involved in the innate immune response to various RNA viruses and some DNA viruses such as poxviruses, and also to the bacterial pathogen Listeria monocytogenes. Can bind both ssRNA and dsRNA, with a higher affinity for dsRNA. Shows a preference to 5'-triphosphorylated RNA, although it can recognize RNA lacking a 5'-triphosphate. This chain is ATP-dependent RNA helicase DHX58, found in Mus musculus (Mouse).